The chain runs to 832 residues: MVSQCQIRVVRSGGSKLDYRRSVFSADGKYLICVSGDFIKVYSTSTEECIHALQGHRKLVTGIELNPKNHLQLYSCSLDGTIKLWDFTDGILIKTFLIGCKFLSLYTSATDDLVFAVTLKNNDSASSQLVSVKLPKSASQECEAKEISVIIEDVSHLPKCTAIGRQCLYVASVKGVHLSIYYFKTKKSFRFSLKATSKKGANNIFTVVACHPSEDCIATGHMDGRIRLWRNFNHKKEYTYTSLHWHHDSVMDLAFSAQGTKLLSGGVESVLVQWPYGSEEKKEFLPRLGAAIEHISVSPHGTLYCTSHTDNKISIIDTSLKVSGIIQGLLKGTVVKTGLIVDPRSNALVLNGKPGHLQFYSLLNDRHLYNLDIVQQEFIHQAGLQYMDLVKASFSSTGRWLATVEELQGGEDSMDLEMQMKLWEYQDKSQSFVLNTTINRPHEDHITSLCFRDEGNSEKEAPTLVTTGKDGLFKVWMLNNNYDIYKQSSSWLCDFVGGYHKNQATNCCFSEDGSLLAVSFDEIITVWESSTWDLKQTFCQPPGKIRNLCFGRMSCSKYLVASTNNGFICCWNLLTCALEWRAQLDATVLQPDPLSENIAVVSCSKRWSNLFLFQPSEPRPFYTQKNICQEKVQWAVFVPKEIPEFVKSESHQWLNKSQLYFLTEKQDLLTFSSKSTEERLTPLSKQLAVEESLPVTPFHLLLGKKRQEEQEKLDAQSVRAAPSFHRGYQNSAIREVLHTPAHVLPPASVLCTVFVNSLLISKKSQSTEESKEDEEMKSEHSEADSSDETEEMESQKRFPSAFSLDVAAMLPKFQEKELRRIRRTDYSWISSL.

13 WD repeats span residues 4-43 (QCQI…KVYS), 47-86 (EECI…KLWD), 90-131 (GILI…QLVS), 145-184 (KEIS…YYFK), 193-230 (LKAT…RLWR), 236-275 (KEYT…VQWP), 278-317 (SEEK…SIID), 323-361 (SGII…QFYS), 375-424 (QQEF…KLWE), 431-477 (SFVL…KVWM), 490-528 (SWLC…TVWE), 532-572 (WDLK…CCWN), and 577-614 (ALEW…FLFQ). Residues 764–798 (SQSTEESKEDEEMKSEHSEADSSDETEEMESQKRF) form a disordered region.

As to quaternary structure, component of the proposed t-UTP subcomplex of the ribosomal small subunit (SSU) processome. SSU processome is composed of more than 70 proteins and the RNA chaperone small nucleolar RNA (snoRNA) U3.

The protein localises to the nucleus. It is found in the nucleolus. In terms of biological role, ribosome biogenesis factor. Part of the small subunit (SSU) processome, first precursor of the small eukaryotic ribosomal subunit. During the assembly of the SSU processome in the nucleolus, many ribosome biogenesis factors, an RNA chaperone and ribosomal proteins associate with the nascent pre-rRNA and work in concert to generate RNA folding, modifications, rearrangements and cleavage as well as targeted degradation of pre-ribosomal RNA by the RNA exosome. Involved in nucleolar processing of pre-18S ribosomal RNA. Required for optimal pre-ribosomal RNA transcription by RNA polymerase I. The protein is WD repeat-containing protein 75 (wdr75) of Xenopus laevis (African clawed frog).